A 206-amino-acid polypeptide reads, in one-letter code: MNGLFVSFEGVDGVGKTTQVERLRAYLEAQGRTVVVTREPGGTALGKAIRQLLLHGVDGGAVDIAPRAEALLFAADRAQHVAETIRPALERGEVVITDRYLDSSLAYQAGGRELTPEEIRSLSMWATNNLLPDRTYLLDMDPALSHHRLEHAEDRMESAGDDFQSRTRQAFLDLAAAEPNRFRVIDASQSIEAVWAAIESDIKELA.

10–17 (GVDGVGKT) serves as a coordination point for ATP.

It belongs to the thymidylate kinase family.

It catalyses the reaction dTMP + ATP = dTDP + ADP. Functionally, phosphorylation of dTMP to form dTDP in both de novo and salvage pathways of dTTP synthesis. This Bifidobacterium longum (strain NCC 2705) protein is Thymidylate kinase.